The sequence spans 526 residues: Alpha-ketoglutaric semialdehyde dehydrogenase (526 aa).

NADP(+) is bound by residues 159-160 (SN), 185-188 (KAHS), and 240-241 (GS). The active-site Proton acceptor is the Glu264. Residue Cys301 is the Nucleophile of the active site. NADP(+) is bound at residue Glu393.

The protein belongs to the aldehyde dehydrogenase family.

The enzyme catalyses 2,5-dioxopentanoate + NADP(+) + H2O = 2-oxoglutarate + NADPH + 2 H(+). It functions in the pathway carbohydrate acid metabolism; D-glucarate degradation. In terms of biological role, catalyzes the NAD(P)(+)-dependent oxidation of alpha-ketoglutaric semialdehyde (alphaKGSA) to alpha-ketoglutarate in the D-glutarate degradation pathway. This is Alpha-ketoglutaric semialdehyde dehydrogenase from Acinetobacter baylyi (strain ATCC 33305 / BD413 / ADP1).